Consider the following 314-residue polypeptide: Glycerol-3-phosphate dehydrogenase [NAD(P)+] (314 aa).

Residues serine 14, phenylalanine 15, arginine 35, and lysine 108 each contribute to the NADPH site. Sn-glycerol 3-phosphate contacts are provided by lysine 108 and glycine 136. Residue alanine 140 participates in NADPH binding. Sn-glycerol 3-phosphate-binding residues include lysine 191, aspartate 247, serine 257, arginine 258, and asparagine 259. The active-site Proton acceptor is the lysine 191. Residue arginine 258 participates in NADPH binding. NADPH-binding residues include leucine 282 and glutamate 284.

The protein belongs to the NAD-dependent glycerol-3-phosphate dehydrogenase family.

The protein resides in the cytoplasm. It catalyses the reaction sn-glycerol 3-phosphate + NAD(+) = dihydroxyacetone phosphate + NADH + H(+). The enzyme catalyses sn-glycerol 3-phosphate + NADP(+) = dihydroxyacetone phosphate + NADPH + H(+). It functions in the pathway membrane lipid metabolism; glycerophospholipid metabolism. In terms of biological role, catalyzes the reduction of the glycolytic intermediate dihydroxyacetone phosphate (DHAP) to sn-glycerol 3-phosphate (G3P), the key precursor for phospholipid synthesis. In Rickettsia bellii (strain OSU 85-389), this protein is Glycerol-3-phosphate dehydrogenase [NAD(P)+].